We begin with the raw amino-acid sequence, 209 residues long: Imidazoleglycerol-phosphate dehydratase (209 aa).

The protein belongs to the imidazoleglycerol-phosphate dehydratase family.

It is found in the cytoplasm. The catalysed reaction is D-erythro-1-(imidazol-4-yl)glycerol 3-phosphate = 3-(imidazol-4-yl)-2-oxopropyl phosphate + H2O. Its pathway is amino-acid biosynthesis; L-histidine biosynthesis; L-histidine from 5-phospho-alpha-D-ribose 1-diphosphate: step 6/9. This is Imidazoleglycerol-phosphate dehydratase from Prochlorococcus marinus (strain MIT 9313).